The primary structure comprises 468 residues: 6-phosphogluconate dehydrogenase, decarboxylating (468 aa).

Residues glycine 10–glycine 15, asparagine 33–serine 35, valine 74–alanine 76, and asparagine 102 each bind NADP(+). Residues asparagine 102 and serine 128–glycine 130 each bind substrate. Catalysis depends on lysine 183, which acts as the Proton acceptor. Substrate is bound at residue histidine 186 to asparagine 187. Catalysis depends on glutamate 190, which acts as the Proton donor. Substrate contacts are provided by tyrosine 191, lysine 260, arginine 287, arginine 445, and histidine 451.

Belongs to the 6-phosphogluconate dehydrogenase family. Homodimer.

The enzyme catalyses 6-phospho-D-gluconate + NADP(+) = D-ribulose 5-phosphate + CO2 + NADPH. Its pathway is carbohydrate degradation; pentose phosphate pathway; D-ribulose 5-phosphate from D-glucose 6-phosphate (oxidative stage): step 3/3. Its function is as follows. Catalyzes the oxidative decarboxylation of 6-phosphogluconate to ribulose 5-phosphate and CO(2), with concomitant reduction of NADP to NADPH. This Klebsiella pneumoniae protein is 6-phosphogluconate dehydrogenase, decarboxylating (gnd).